The chain runs to 250 residues: 1-(5-phosphoribosyl)-5-[(5-phosphoribosylamino)methylideneamino] imidazole-4-carboxamide isomerase (250 aa).

The active-site Proton acceptor is the D8. The active-site Proton donor is the D129.

It belongs to the HisA/HisF family.

Its subcellular location is the cytoplasm. The catalysed reaction is 1-(5-phospho-beta-D-ribosyl)-5-[(5-phospho-beta-D-ribosylamino)methylideneamino]imidazole-4-carboxamide = 5-[(5-phospho-1-deoxy-D-ribulos-1-ylimino)methylamino]-1-(5-phospho-beta-D-ribosyl)imidazole-4-carboxamide. The protein operates within amino-acid biosynthesis; L-histidine biosynthesis; L-histidine from 5-phospho-alpha-D-ribose 1-diphosphate: step 4/9. The chain is 1-(5-phosphoribosyl)-5-[(5-phosphoribosylamino)methylideneamino] imidazole-4-carboxamide isomerase from Desulfovibrio desulfuricans (strain ATCC 27774 / DSM 6949 / MB).